We begin with the raw amino-acid sequence, 362 residues long: 3-dehydroquinate synthase (362 aa).

Residues 71-76, 105-109, 129-130, Lys142, Lys151, and 169-172 contribute to the NAD(+) site; these read DGEQYK, GVIGD, TT, and CLKT. Zn(2+)-binding residues include Glu184, His247, and His264.

It belongs to the sugar phosphate cyclases superfamily. Dehydroquinate synthase family. Requires Co(2+) as cofactor. It depends on Zn(2+) as a cofactor. NAD(+) is required as a cofactor.

Its subcellular location is the cytoplasm. It catalyses the reaction 7-phospho-2-dehydro-3-deoxy-D-arabino-heptonate = 3-dehydroquinate + phosphate. Its pathway is metabolic intermediate biosynthesis; chorismate biosynthesis; chorismate from D-erythrose 4-phosphate and phosphoenolpyruvate: step 2/7. In terms of biological role, catalyzes the conversion of 3-deoxy-D-arabino-heptulosonate 7-phosphate (DAHP) to dehydroquinate (DHQ). The sequence is that of 3-dehydroquinate synthase from Salmonella enteritidis PT4 (strain P125109).